The sequence spans 267 residues: 7alpha-hydroxysteroid dehydrogenase (267 aa).

Residues 13 to 18 (SATRGI), arginine 38, 63 to 64 (DA), and asparagine 90 each bind NADP(+). Cholate contacts are provided by serine 145 and tyrosine 158. NADP(+) is bound by residues tyrosine 158, lysine 162, and 191 to 195 (IATDA). The active-site Proton acceptor is the tyrosine 158.

It belongs to the short-chain dehydrogenases/reductases (SDR) family. As to quaternary structure, homotetramer.

The catalysed reaction is cholate + NADP(+) = 3alpha,12alpha-dihydroxy-7-oxo-5beta-cholanate + NADPH + H(+). It carries out the reaction chenodeoxycholate + NADP(+) = 7-oxolithocholate + NADPH + H(+). Functionally, 7alpha-hydroxysteroid dehydrogenase that catalyzes the NADP(+)-dependent oxidation of the 7alpha-hydroxy group of 7alpha-hydroxysteroids, such as the major human bile acids cholate and chenodeoxycholate, to the corresponding 7-oxosteroids. Is thus liley involved in the metabolism of primary bile acids. The chain is 7alpha-hydroxysteroid dehydrogenase from Paraclostridium sordellii (Clostridium sordellii).